A 410-amino-acid polypeptide reads, in one-letter code: ACT domain-containing protein ACR10 (410 aa).

3 consecutive ACT domains span residues 22-105 (VITI…SESQ), 114-197 (LLKL…LVGP), and 245-324 (LIHI…VVMM).

In terms of biological role, may bind amino acids. The chain is ACT domain-containing protein ACR10 from Arabidopsis thaliana (Mouse-ear cress).